A 312-amino-acid chain; its full sequence is Olfactory receptor 7G3 (312 aa).

Residues 1-25 (MKAGNFSDTPEFFLLGLSGDPELQP) lie on the Extracellular side of the membrane. Asparagine 5 is a glycosylation site (N-linked (GlcNAc...) asparagine). Residues 26–46 (ILFMLFLSMYLATMLGNLLII) traverse the membrane as a helical segment. At 47-54 (LAVNSDSH) the chain is on the cytoplasmic side. The chain crosses the membrane as a helical span at residues 55-75 (LHTPMYFLLSILSLVDICFTS). Topologically, residues 76 to 99 (TTMPKMLVNIQAQAQSINYTGCLT) are extracellular. Asparagine 93 carries N-linked (GlcNAc...) asparagine glycosylation. A disulfide bridge connects residues cysteine 97 and cysteine 189. The chain crosses the membrane as a helical span at residues 100–120 (QICFVLVFVGLENGILVMMAY). The Cytoplasmic segment spans residues 121 to 139 (DRFVAICHPLRYNVIMNPK). Residues 140–160 (LCGLLLLLSFIVSVLDALLHT) traverse the membrane as a helical segment. At 161–197 (LMVLQLTFCIDLEIPHFFCELAHILKLACSDVLINNI) the chain is on the extracellular side. The chain crosses the membrane as a helical span at residues 198-217 (LVYLVTSLLGVVPLSGIIFS). The Cytoplasmic portion of the chain corresponds to 218-237 (YTRIVSSVMKIPSAGGKYKA). The helical transmembrane segment at 238–258 (FSICGSHLIVVSLFYGTGFGV) threads the bilayer. The Extracellular segment spans residues 259–271 (YLSSGATHSSRKG). A helical transmembrane segment spans residues 272–292 (AIASVMYTVVTPMLNPLIYSL). The Cytoplasmic portion of the chain corresponds to 293–312 (RNKDMLKALRKLISRIPSFH).

This sequence belongs to the G-protein coupled receptor 1 family.

It is found in the cell membrane. Odorant receptor. The polypeptide is Olfactory receptor 7G3 (OR7G3) (Homo sapiens (Human)).